We begin with the raw amino-acid sequence, 531 residues long: Developmental and secondary metabolism regulator VE1 (531 aa).

The Velvet domain maps to 26 to 220; that stretch reads NRSLWYQMTV…ADQGCPVRIR (195 aa). Residues 40–45 carry the Nuclear localization signal motif; sequence ERARAC. Disordered regions lie at residues 206-435 and 447-517; these read LSKT…SQTS and PVSP…SRAD. Residues 244-253 show a composition bias toward basic and acidic residues; that stretch reads FERREEDFGR. The span at 295–306 shows a compositional bias: pro residues; the sequence is YPPPPPPPPSYE. Residues 348–357 show a composition bias toward polar residues; the sequence is YAPTSQSPYS. The span at 381 to 390 shows a compositional bias: basic and acidic residues; the sequence is LKHELYDRRQ. The segment covering 391–405 has biased composition (low complexity); sequence STSTYVPPSPSVYST. The span at 416 to 427 shows a compositional bias: pro residues; that stretch reads SYPPTPVAAPRP. The PEST stretch occupies residues 430-461; sequence MHSQTSLPALKIDQLVSPVSPLPPIEPQTGPA. Over residues 479 to 491 the composition is skewed to polar residues; the sequence is FAQSTRPLHNGQR.

The protein belongs to the velvet family. VeA subfamily. In terms of assembly, component of the heterotrimeric velvet complex composed of LAE1, VE1 and VELB; VE1 acting as a bridging protein between LAE1 and VELB. Interacts with VELB and VELC.

It localises to the nucleus. Its subcellular location is the cytoplasm. Functionally, component of the velvet transcription factor complex that controls sexual/asexual developmental ratio in response to light, promoting sexual development in the darkness while stimulating asexual sporulation under illumination. The velvet complex hat acts as a global regulator for secondary metabolite gene expression. Controls the expression of the cycotoxins fumonisins and fusarins gene cluster. Involved in cell wall integrity, cell surface hydrophobicity, hyphal polarity and conidiation pattern. Required for pathogenicity against maize seedlings. Involved in oxidative stress resistance by positively regulating the transcription of the catalase-encoding gene CAT2. In Gibberella moniliformis (strain M3125 / FGSC 7600) (Maize ear and stalk rot fungus), this protein is Developmental and secondary metabolism regulator VE1.